The chain runs to 80 residues: U-poneritoxin(01)-Om3a (80 aa).

A signal peptide spans 1–25 (MKPSGLALAFLVVFMMAIMYNSVQA). A propeptide spanning residues 26-39 (AAIADADAEAEAIA) is cleaved from the precursor.

Belongs to the formicidae venom precursor-01 superfamily. Truncated sequences of this peptide have also been found in the venom. It is possible they have been cleaved in the venom. Expressed by the venom gland.

The protein resides in the secreted. Functionally, cationic amphipathic alpha-helical peptide with antimicrobial activities against E.coli (MIC=3.1 uM), S.aureus (MIC=25 uM), and S.cerevisiae (MIC=50 uM). Also shows histamine-releasing activity (37.5% at 10 uM). Does not show hemolytic activity, even at 50 uM. This is U-poneritoxin(01)-Om3a from Odontomachus monticola (Trap-jaw ant).